Consider the following 581-residue polypeptide: Proline--tRNA ligase (581 aa).

Belongs to the class-II aminoacyl-tRNA synthetase family. ProS type 1 subfamily. As to quaternary structure, homodimer.

Its subcellular location is the cytoplasm. It carries out the reaction tRNA(Pro) + L-proline + ATP = L-prolyl-tRNA(Pro) + AMP + diphosphate. In terms of biological role, catalyzes the attachment of proline to tRNA(Pro) in a two-step reaction: proline is first activated by ATP to form Pro-AMP and then transferred to the acceptor end of tRNA(Pro). As ProRS can inadvertently accommodate and process non-cognate amino acids such as alanine and cysteine, to avoid such errors it has two additional distinct editing activities against alanine. One activity is designated as 'pretransfer' editing and involves the tRNA(Pro)-independent hydrolysis of activated Ala-AMP. The other activity is designated 'posttransfer' editing and involves deacylation of mischarged Ala-tRNA(Pro). The misacylated Cys-tRNA(Pro) is not edited by ProRS. The chain is Proline--tRNA ligase from Blochmanniella floridana.